Here is a 124-residue protein sequence, read N- to C-terminus: Ragulator complex protein LAMTOR2 homolog (124 aa).

It belongs to the GAMAD family. In terms of assembly, part of the Ragulator complex.

Its function is as follows. Regulator of the TOR pathway, a signaling cascade that promotes cell growth in response to growth factors, energy levels, and amino acids. May activate the TOR signaling cascade in response to amino acids. In Caenorhabditis elegans, this protein is Ragulator complex protein LAMTOR2 homolog.